A 437-amino-acid chain; its full sequence is Chromosomal replication initiator protein DnaA (437 aa).

The segment at 1-69 is domain I, interacts with DnaA modulators; that stretch reads MLGDTTLKQL…AHLFELSTGI (69 aa). The tract at residues 69–100 is domain II; that stretch reads IRPKIEIRLGSLKKDVKSSSPKAGVSKGQKST. The interval 101-315 is domain III, AAA+ region; sequence ILNPSFTFDS…GIIIKLNAYA (215 aa). The ATP site is built by glycine 145, glycine 147, lysine 148, and threonine 149. Residues 316–437 are domain IV, binds dsDNA; sequence NLMNQEITLQ…ELKNKIKSRN (122 aa).

It belongs to the DnaA family. Oligomerizes as a right-handed, spiral filament on DNA at oriC.

Its subcellular location is the cytoplasm. Its function is as follows. Plays an essential role in the initiation and regulation of chromosomal replication. ATP-DnaA binds to the origin of replication (oriC) to initiate formation of the DNA replication initiation complex once per cell cycle. Binds the DnaA box (a 9 base pair repeat at the origin) and separates the double-stranded (ds)DNA. Forms a right-handed helical filament on oriC DNA; dsDNA binds to the exterior of the filament while single-stranded (ss)DNA is stabiized in the filament's interior. The ATP-DnaA-oriC complex binds and stabilizes one strand of the AT-rich DNA unwinding element (DUE), permitting loading of DNA polymerase. After initiation quickly degrades to an ADP-DnaA complex that is not apt for DNA replication. Binds acidic phospholipids. In Wolinella succinogenes (strain ATCC 29543 / DSM 1740 / CCUG 13145 / JCM 31913 / LMG 7466 / NCTC 11488 / FDC 602W) (Vibrio succinogenes), this protein is Chromosomal replication initiator protein DnaA.